A 91-amino-acid polypeptide reads, in one-letter code: MSKVGVVPLIFLVLLSIAALQNGDDPRRQRDEKQSPQGDILRSTLTKYSYNIQRRCWAGGSPCHLCSSSQVCIAPTGHPAIMCGRCVPILT.

Residues 1–23 (MSKVGVVPLIFLVLLSIAALQNG) form the signal peptide. Residues 24-55 (DDPRRQRDEKQSPQGDILRSTLTKYSYNIQRR) constitute a propeptide that is removed on maturation. 3 disulfide bridges follow: Cys-56/Cys-72, Cys-63/Cys-83, and Cys-66/Cys-86.

This sequence belongs to the conotoxin M superfamily. In terms of tissue distribution, expressed by the venom duct.

The protein localises to the secreted. Probable neurotoxin. The sequence is that of Conotoxin Im9.1 from Conus imperialis (Imperial cone).